Reading from the N-terminus, the 519-residue chain is 3-octaprenyl-4-hydroxybenzoate carboxy-lyase (519 aa).

Asparagine 177 contributes to the Mn(2+) binding site. Residues 180–182 (IYR), 194–196 (RWL), and 199–200 (RG) contribute to the prenylated FMN site. Mn(2+) is bound at residue glutamate 243. Aspartate 318 serves as the catalytic Proton donor.

This sequence belongs to the UbiD family. In terms of assembly, homohexamer. Prenylated FMN is required as a cofactor. It depends on Mn(2+) as a cofactor.

Its subcellular location is the cell membrane. It catalyses the reaction a 4-hydroxy-3-(all-trans-polyprenyl)benzoate + H(+) = a 2-(all-trans-polyprenyl)phenol + CO2. The protein operates within cofactor biosynthesis; ubiquinone biosynthesis. Functionally, catalyzes the decarboxylation of 3-octaprenyl-4-hydroxy benzoate to 2-octaprenylphenol, an intermediate step in ubiquinone biosynthesis. The polypeptide is 3-octaprenyl-4-hydroxybenzoate carboxy-lyase (Burkholderia thailandensis (strain ATCC 700388 / DSM 13276 / CCUG 48851 / CIP 106301 / E264)).